Reading from the N-terminus, the 376-residue chain is MNLLEYEAKAIAKKYGIPTPEGVLIERPEQVNEAVEKLGLPVVLKAQVPVAGRGKAGGVKLARDPDEALELAEELFSKEIKGFPVLSLLVEKAENIQKELYLSFTIDRTNRKVVMLASAEGGMEIEELAKEKPDAIVKLPIEPEVGLKAHEAREVGKRIGLSGQLLRQFEGIAKTMYKIFEDYDAELVESNPLAITDRGLVALDFRMIVDDNAIFRHPELEASRERELSELEKEAARWGFFYVELDGDIGIIGNGAGLTMATMDVVNYYGGRPANFLDIGGGARRDRVKAAVNVLLKNPKVKVIFVNIFGGITLASEVAQGIVDALSESNVKKPIVARIVGTAEEEGKKILKEAGIPLFESMDEAAQEAVKLAKAA.

An ATP-grasp domain is found at 9–234 (KAIAKKYGIP…ERELSELEKE (226 aa)). Residues K45, 52–54 (GRG), E91, E94, and E99 each bind ATP. Mg(2+) contacts are provided by N191 and D204. Substrate is bound by residues N254 and 311 to 313 (GIT).

This sequence belongs to the succinate/malate CoA ligase beta subunit family. Heterotetramer of two alpha and two beta subunits. It depends on Mg(2+) as a cofactor.

The enzyme catalyses succinate + ATP + CoA = succinyl-CoA + ADP + phosphate. It carries out the reaction GTP + succinate + CoA = succinyl-CoA + GDP + phosphate. The protein operates within carbohydrate metabolism; tricarboxylic acid cycle; succinate from succinyl-CoA (ligase route): step 1/1. Succinyl-CoA synthetase functions in the citric acid cycle (TCA), coupling the hydrolysis of succinyl-CoA to the synthesis of either ATP or GTP and thus represents the only step of substrate-level phosphorylation in the TCA. The beta subunit provides nucleotide specificity of the enzyme and binds the substrate succinate, while the binding sites for coenzyme A and phosphate are found in the alpha subunit. The sequence is that of Succinate--CoA ligase [ADP-forming] subunit beta from Ignicoccus hospitalis (strain KIN4/I / DSM 18386 / JCM 14125).